A 213-amino-acid polypeptide reads, in one-letter code: Histone H1 (213 aa).

The segment covering 1–25 has biased composition (low complexity); the sequence is MAAATASAAATPAKKAAPKKPAAAP. Disordered regions lie at residues 1-30 and 81-213; these read MAAATASAAATPAKKAAPKKPAAAPEHPSY and GEFV…AKSS. The H15 domain maps to 26-97; that stretch reads EHPSYKEMLT…GPSGTVKLAK (72 aa). Composition is skewed to low complexity over residues 102–113, 123–137, 157–176, and 203–213; these read AAAPKKPAAKKA, KKAAAPKKAAAPKSA, KKAAAPKKVAAPVEKPAPVK, and PKKAATPAKSS.

This sequence belongs to the histone H1/H5 family.

The protein resides in the nucleus. It is found in the chromosome. Could act as an H1-type linker histone. The sequence is that of Histone H1 from Ascobolus immersus.